The chain runs to 958 residues: Dermatan-sulfate epimerase (958 aa).

The signal sequence occupies residues 1–22; that stretch reads MRTHTRGAPSVFFICLFCFVSA. At 23–902 the chain is on the lumenal side; sequence CVTDENPEVM…APALSASYTR (880 aa). Asn183 carries N-linked (GlcNAc...) asparagine glycosylation. The active-site Proton donor is the His205. Tyr261 is a catalytic residue. N-linked (GlcNAc...) asparagine glycosylation is found at Asn336 and Asn411. 2 residues coordinate Mn(2+): His452 and Glu470. The active site involves Tyr473. Asn481 lines the Mn(2+) pocket. N-linked (GlcNAc...) asparagine glycans are attached at residues Asn642 and Asn648. A helical membrane pass occupies residues 903-923; that stretch reads LFLILNIAIFFVMLAMQLTYF. Residues 924-933 lie on the Cytoplasmic side of the membrane; that stretch reads QRAQSLHGQR. The helical transmembrane segment at 934–954 threads the bilayer; the sequence is CLYAVLLIDSCILLWLYSSCS. The Lumenal portion of the chain corresponds to 955 to 958; the sequence is QSQC.

It belongs to the dermatan-sulfate isomerase family. The cofactor is Mn(2+). In terms of processing, N-glycosylated. Glycosylation is important for enzymatic activity.

It localises to the endoplasmic reticulum membrane. It is found in the golgi apparatus membrane. The protein localises to the cytoplasmic vesicle membrane. Its subcellular location is the microsome membrane. The catalysed reaction is chondroitin 4'-sulfate = dermatan 4'-sulfate. The protein operates within glycan metabolism; chondroitin sulfate biosynthesis. Its pathway is glycan metabolism; heparan sulfate biosynthesis. Converts D-glucuronic acid to L-iduronic acid (IdoUA) residues. Plays an important role in the biosynthesis of the glycosaminoglycan/mucopolysaccharide dermatan sulfate. The protein is Dermatan-sulfate epimerase (DSE) of Bos taurus (Bovine).